The sequence spans 156 residues: uncharacterized protein (156 aa).

Residues 1 to 18 form the signal peptide; the sequence is MKKLLSIFLMAFSLNAFA. The 138-residue stretch at 19 to 156 folds into the Thioredoxin domain; the sequence is QTNLADVQLK…AEQIRVFAEK (138 aa). A disulfide bond links Cys54 and Cys57.

Belongs to the thioredoxin family.

This is an uncharacterized protein from Haemophilus influenzae (strain ATCC 51907 / DSM 11121 / KW20 / Rd).